The following is a 415-amino-acid chain: Elongation factor 1-gamma 1 (415 aa).

S2 is modified (N-acetylserine). A GST N-terminal domain is found at 2 to 78 (SQGTLYANFR…YLVKLSQDDK (77 aa)). T32 is subject to Phosphothreonine. The region spanning 89 to 215 (DLNAQAQIIR…KDFKFADKPL (127 aa)) is the GST C-terminal domain. The disordered stretch occupies residues 212-256 (DKPLSPPQKKKEKKAPAAAPAASKKKEEAKPAATETETSSKKPKH). The EF-1-gamma C-terminal domain occupies 254–415 (PKHPLELLGK…KEIVDGKVLK (162 aa)).

The eukaryotic elongation factor 1 complex (eEF1) is probably a heterohexamer. Two trimeric complexes, each composed of eEF1A (TEF1 or TEF2), eEF1Balpha (EFB1) and eEF1Bgamma (CAM1 or TEF4), are probably dimerized via the eF1Bgamma subunits. The eEF1B subcomplex with the GEF activity is formed of eEF1Balpha and eEF1Bgamma. CAM1 interacts with EFB1. Component of a complex bound to MXR1 promoter region.

It is found in the cytoplasm. Its subcellular location is the nucleus. The protein operates within protein biosynthesis; polypeptide chain elongation. Subunit of the eukaryotic elongation factor 1 complex (eEF1). Probably plays a role in anchoring the complex to other cellular components. May be involved in transcriptional regulation of MXR1. The chain is Elongation factor 1-gamma 1 (CAM1) from Saccharomyces cerevisiae (strain ATCC 204508 / S288c) (Baker's yeast).